The chain runs to 517 residues: Perilipin-1 (517 aa).

Phosphoserine is present on S81. T85 carries the post-translational modification Phosphothreonine. Phosphoserine is present on residues S126, S130, S132, S137, and S174. The interval 197–217 (VESAPSSGRQKTQKAPKAKPS) is disordered. A phosphothreonine mark is found at T224, T299, and T301. The tract at residues 285-321 (HNLAASKDENHEDQTDTEGEETDEEEEEEESEAEENV) is disordered. The segment at 291-322 (KDENHEDQTDTEGEETDEEEEEEESEAEENVL) is required for interaction with CIDEC. The span at 299–319 (TDTEGEETDEEEEEEESEAEE) shows a compositional bias: acidic residues. 11 positions are modified to phosphoserine: S315, S385, S387, P408, S411, S434, S436, S440, S460, S492, and S494. The disordered stretch occupies residues 415–495 (PESEFQDIDN…KPARRVSDSF (81 aa)). The span at 483–492 (PREKPARRVS) shows a compositional bias: basic and acidic residues.

It belongs to the perilipin family. As to quaternary structure, interacts with ABHD5. Interacts with CIDEC. Interacts with AQP7. Major cAMP-dependent protein kinase substrate in adipocytes, also dephosphorylated by PP1. When phosphorylated, may be maximally sensitive to HSL. When unphosphorylated, may play a role in the inhibition of lipolysis, by acting as a barrier in lipid droplet. Post-translationally, the N-terminus is blocked. Adipocytes.

Its subcellular location is the endoplasmic reticulum. The protein resides in the lipid droplet. Modulator of adipocyte lipid metabolism. Coats lipid storage droplets to protect them from breakdown by hormone-sensitive lipase (HSL). Its absence may result in leanness. Plays a role in unilocular lipid droplet formation by activating CIDEC. Their interaction promotes lipid droplet enlargement and directional net neutral lipid transfer. May modulate lipolysis and triglyceride levels. This Rattus norvegicus (Rat) protein is Perilipin-1 (Plin1).